A 293-amino-acid polypeptide reads, in one-letter code: 4-hydroxy-tetrahydrodipicolinate synthase 1 (293 aa).

Thr46 is a binding site for pyruvate. Tyr134 functions as the Proton donor/acceptor in the catalytic mechanism. Lys162 acts as the Schiff-base intermediate with substrate in catalysis. Ile204 is a binding site for pyruvate.

The protein belongs to the DapA family. Homotetramer; dimer of dimers.

It localises to the cytoplasm. The enzyme catalyses L-aspartate 4-semialdehyde + pyruvate = (2S,4S)-4-hydroxy-2,3,4,5-tetrahydrodipicolinate + H2O + H(+). It participates in amino-acid biosynthesis; L-lysine biosynthesis via DAP pathway; (S)-tetrahydrodipicolinate from L-aspartate: step 3/4. Catalyzes the condensation of (S)-aspartate-beta-semialdehyde [(S)-ASA] and pyruvate to 4-hydroxy-tetrahydrodipicolinate (HTPA). This is 4-hydroxy-tetrahydrodipicolinate synthase 1 from Clostridium acetobutylicum (strain ATCC 824 / DSM 792 / JCM 1419 / IAM 19013 / LMG 5710 / NBRC 13948 / NRRL B-527 / VKM B-1787 / 2291 / W).